Consider the following 265-residue polypeptide: Deoxycytidine kinase 2 (265 aa).

31-39 is a binding site for ATP; sequence GNIAAGKST. Substrate is bound by residues E56, Y89, and Q100. The Proton acceptor role is filled by E130. Positions 131 and 136 each coordinate substrate. Position 191-195 (191-195) interacts with ATP; sequence RLQKR. E200 provides a ligand contact to substrate. An ATP-binding site is contributed by 243–245; sequence EDF.

The protein belongs to the DCK/DGK family. In terms of assembly, homodimer. As to expression, expressed at high levels in adult intestine, spleen, thymus and testis with lower levels in skeletal muscle and eye. In the embryo, expressed at higher levels until day 10 with lower levels in later stages.

Its subcellular location is the nucleus. The catalysed reaction is 2'-deoxycytidine + a ribonucleoside 5'-triphosphate = dCMP + a ribonucleoside 5'-diphosphate + H(+). It catalyses the reaction 2'-deoxyguanosine + ATP = dGMP + ADP + H(+). It carries out the reaction 2'-deoxyadenosine + ATP = dAMP + ADP + H(+). Functionally, phosphorylates the deoxyribonucleosides deoxyadenosine, deoxycytidine and deoxyguanosine. Shows highest activity against deoxyguanosine followed by deoxycytidine and then deoxyadenosine. Shows only very minor activity against deoxyuridine and deoxythymidine. The chain is Deoxycytidine kinase 2 from Gallus gallus (Chicken).